A 464-amino-acid polypeptide reads, in one-letter code: Siroheme synthase (464 aa).

Positions 1-203 (MKYLPLFHNL…GQGAEAERLL (203 aa)) are precorrin-2 dehydrogenase /sirohydrochlorin ferrochelatase. Residues 22 to 23 (EI) and 43 to 44 (PE) contribute to the NAD(+) site. Ser-128 is modified (phosphoserine). The uroporphyrinogen-III C-methyltransferase stretch occupies residues 216–464 (GEVYLVGAGP…AWFEGAQGQI (249 aa)). Pro-225 is a binding site for S-adenosyl-L-methionine. Asp-248 (proton acceptor) is an active-site residue. The Proton donor role is filled by Lys-270. S-adenosyl-L-methionine-binding positions include 301-303 (GGD), Ile-306, 331-332 (TA), Met-383, and Gly-412.

In the N-terminal section; belongs to the precorrin-2 dehydrogenase / sirohydrochlorin ferrochelatase family. This sequence in the C-terminal section; belongs to the precorrin methyltransferase family.

It carries out the reaction uroporphyrinogen III + 2 S-adenosyl-L-methionine = precorrin-2 + 2 S-adenosyl-L-homocysteine + H(+). The catalysed reaction is precorrin-2 + NAD(+) = sirohydrochlorin + NADH + 2 H(+). The enzyme catalyses siroheme + 2 H(+) = sirohydrochlorin + Fe(2+). Its pathway is cofactor biosynthesis; adenosylcobalamin biosynthesis; precorrin-2 from uroporphyrinogen III: step 1/1. The protein operates within cofactor biosynthesis; adenosylcobalamin biosynthesis; sirohydrochlorin from precorrin-2: step 1/1. It functions in the pathway porphyrin-containing compound metabolism; siroheme biosynthesis; precorrin-2 from uroporphyrinogen III: step 1/1. It participates in porphyrin-containing compound metabolism; siroheme biosynthesis; siroheme from sirohydrochlorin: step 1/1. Its pathway is porphyrin-containing compound metabolism; siroheme biosynthesis; sirohydrochlorin from precorrin-2: step 1/1. In terms of biological role, multifunctional enzyme that catalyzes the SAM-dependent methylations of uroporphyrinogen III at position C-2 and C-7 to form precorrin-2 via precorrin-1. Then it catalyzes the NAD-dependent ring dehydrogenation of precorrin-2 to yield sirohydrochlorin. Finally, it catalyzes the ferrochelation of sirohydrochlorin to yield siroheme. In Pseudomonas fluorescens (strain Pf0-1), this protein is Siroheme synthase.